Reading from the N-terminus, the 65-residue chain is Large ribosomal subunit protein bL33 (65 aa).

The disordered stretch occupies residues 20–42; the sequence is APASEKRSPGVSRYTTEKNRRNT.

The protein belongs to the bacterial ribosomal protein bL33 family.

The polypeptide is Large ribosomal subunit protein bL33 (Prochlorococcus marinus (strain SARG / CCMP1375 / SS120)).